Reading from the N-terminus, the 1081-residue chain is FHIP family protein GA25918 (1081 aa).

The span at 1–11 (MSWLRSSPLRQ) shows a compositional bias: polar residues. Disordered regions lie at residues 1-31 (MSWL…GSLR), 504-524 (ARPK…EQPI), 650-685 (ADEE…MGGG), 830-913 (NENS…AASS), and 933-1027 (NNNN…SEPA). The residue at position 508 (Ser-508) is a Phosphoserine. The segment covering 657 to 668 (TDLTVTTTTASE) has biased composition (low complexity). Residue Ser-833 is modified to Phosphoserine. Residues 840 to 856 (QPQTTLSQQQQQQQGQQ) are compositionally biased toward low complexity. Residues 857–876 (RSAYATLSAATPVQATQTSA) are compositionally biased toward polar residues. Composition is skewed to low complexity over residues 891–913 (SKSI…AASS) and 933–953 (NNNN…GTGT). Residues 954–963 (CETSLSTNPQ) are compositionally biased toward polar residues. Residues 964–993 (SGAAAARSTGTATTANGNSSNSNISIGGST) show a composition bias toward low complexity. Residues 994–1010 (QTLSGHSNTTTYSSSTL) show a composition bias toward polar residues.

Belongs to the FHIP family.

The polypeptide is FHIP family protein GA25918 (Drosophila pseudoobscura pseudoobscura (Fruit fly)).